A 73-amino-acid chain; its full sequence is Translation initiation factor IF-1 (73 aa).

The S1-like domain occupies 1–73; that stretch reads MAKKEDTIVL…TKARVVYRHR (73 aa).

This sequence belongs to the IF-1 family. As to quaternary structure, component of the 30S ribosomal translation pre-initiation complex which assembles on the 30S ribosome in the order IF-2 and IF-3, IF-1 and N-formylmethionyl-tRNA(fMet); mRNA recruitment can occur at any time during PIC assembly.

It localises to the cytoplasm. In terms of biological role, one of the essential components for the initiation of protein synthesis. Stabilizes the binding of IF-2 and IF-3 on the 30S subunit to which N-formylmethionyl-tRNA(fMet) subsequently binds. Helps modulate mRNA selection, yielding the 30S pre-initiation complex (PIC). Upon addition of the 50S ribosomal subunit IF-1, IF-2 and IF-3 are released leaving the mature 70S translation initiation complex. This is Translation initiation factor IF-1 from Chlamydia caviae (strain ATCC VR-813 / DSM 19441 / 03DC25 / GPIC) (Chlamydophila caviae).